A 234-amino-acid chain; its full sequence is Uridylate kinase (234 aa).

9–12 contacts ATP; sequence KLSG. Residue Gly51 coordinates UMP. Gly52 and Arg56 together coordinate ATP. Residues Asp71 and 132 to 139 each bind UMP; that span reads CGNPFFTT. Positions 159, 165, and 168 each coordinate ATP.

It belongs to the UMP kinase family. Homohexamer.

The protein resides in the cytoplasm. It carries out the reaction UMP + ATP = UDP + ADP. The protein operates within pyrimidine metabolism; CTP biosynthesis via de novo pathway; UDP from UMP (UMPK route): step 1/1. Its activity is regulated as follows. Inhibited by UTP. Catalyzes the reversible phosphorylation of UMP to UDP. This Prochlorococcus marinus (strain MIT 9215) protein is Uridylate kinase.